A 282-amino-acid chain; its full sequence is Ribosomal RNA small subunit methyltransferase A (282 aa).

Positions 15, 17, 42, 64, 89, and 109 each coordinate S-adenosyl-L-methionine.

The protein belongs to the class I-like SAM-binding methyltransferase superfamily. rRNA adenine N(6)-methyltransferase family. RsmA subfamily.

Its subcellular location is the cytoplasm. The enzyme catalyses adenosine(1518)/adenosine(1519) in 16S rRNA + 4 S-adenosyl-L-methionine = N(6)-dimethyladenosine(1518)/N(6)-dimethyladenosine(1519) in 16S rRNA + 4 S-adenosyl-L-homocysteine + 4 H(+). Its function is as follows. Specifically dimethylates two adjacent adenosines (A1518 and A1519) in the loop of a conserved hairpin near the 3'-end of 16S rRNA in the 30S particle. May play a critical role in biogenesis of 30S subunits. The protein is Ribosomal RNA small subunit methyltransferase A of Prochlorococcus marinus (strain MIT 9211).